Consider the following 152-residue polypeptide: Ubiquitin-conjugating enzyme E2 W (152 aa).

M1 is covalently cross-linked (Peptide (Met-Gly) (interchain with G-Cter in ubiquitin)). Positions 4–152 (AATRRLMKEL…TRWWFHDDSV (149 aa)) constitute a UBC core domain. C92 serves as the catalytic Glycyl thioester intermediate.

This sequence belongs to the ubiquitin-conjugating enzyme family.

The enzyme catalyses S-ubiquitinyl-[E1 ubiquitin-activating enzyme]-L-cysteine + [E2 ubiquitin-conjugating enzyme]-L-cysteine = [E1 ubiquitin-activating enzyme]-L-cysteine + S-ubiquitinyl-[E2 ubiquitin-conjugating enzyme]-L-cysteine.. The catalysed reaction is S-ubiquitinyl-[E1 ubiquitin-activating enzyme]-L-cysteine + [acceptor protein]-N-terminal-amino acid = [E1 ubiquitin-activating enzyme]-L-cysteine + N-terminal-ubiquitinyl-[acceptor protein].. It functions in the pathway protein modification; protein ubiquitination. In terms of biological role, accepts ubiquitin from the E1 complex and catalyzes its covalent attachment to other proteins. Together with ubc-18, required for the ubiquitination of membranous organelles, and the removal of paternal mitochondria from early embryos. The protein is Ubiquitin-conjugating enzyme E2 W of Caenorhabditis elegans.